Consider the following 1458-residue polypeptide: MLLSLLLLLLLGAPRRCTEGAAAALSPERVLKWQEKGIFIIQSESLKSCIQAGKSVLTLESCKQPNKNMLWKWVSNQHLFNIGGSGCLGLNLSNPEQPLGLYECDSTHVSLRWRCNRKMITGPLQHTVQVKQDNIIVASGKRLHKWISYMSDSGDICQHVHKDLYTRKGNAHGTPCMFPFQYNHQWHHECTREGRQDDSLWCATTSRYERDEKWGFCPDPTSAEVGCDAVWEKDLNSHICYQFNLLSSLSWSEAHSSCQMHGGALLSIVDEAEENFIRKQVSGEAVEVWTGLNQLDVNAGWQWSDGTPLSYLNWSPEISFEPFVEYHCGTFNSFMPRAWRSRNCESTLPYICKKYLNHVDDEIVEKDAWKYYATDCEPGWAPYHRNCYKLQKEEKTWNEALHSCLSSNSTLIDIGSLAEVEFLVTLLGNENASETWIGLSSNTFPVSFEWSNGSSVIFTNWHTLEPQIFPNRSQLCVSAEQSEGHWKVTDCEETHFYVCKKPGHVLSDAESGCQEGWERHGGFCYKIDTVLRSFDHASSGYYCPPALVTIADRFEQAFITSLISSVVNMKDSYFWIALQDQNDTGEYTWKTAGQKSEPVQYTHWNAHQPRSSGGCVAIRGRNPIGRWEVKDCVHFKAMSLCKQPVETREKMEHEERWPFHPCYLDWESQPGLASCFKVFHSEKVLMKRTWREAEAFCEEFGAHLASFAHIEEENFVNELLHPKFNRSEERQFWIGFNKRNPLNAGSWEWSDGTPVISSFLDNNYFGEDTRNCAVYKANKTLLPLHCGSKREWICKIPRDVRPKIPSWYQYDAPWLFHQDAEYLFYPHSSEWSSFEFVCGWLRSDILTIHSAHEQEFILSKIKALSKYGANWWIGLQEETANDELRWRDGTPVIYQNWDKERDRSMNNQSQRCAFISSITGLWDREECSVSMPSICKRKTFWVIEKEKDTPKQHGTCPKGWLYFDYKCLLVNVPKDPSNWKNWTQARDFCFDEGGTLVAIESEVEQAFITMNLFGQTTNVWIGLQNDDYEKWLNGNPVAYSNWSPSDIINIPSYNTTADQKPIPLCALLSSNPNFHFTGKWYFEDCGKEGYGFVCEKIQDSAGHEVNTSIMDPIPNTLEYGNRTYKIINANMTWYAAIKSCQLHGAELVSITDQYHQSFLTVILSRLGHAHWIGLFTADNGLHFDWSDGTKSSFTFWKDEDSSFLGDCVFADTSGRWHSTACESFLQGAICHVPTETRPFEHPELCSETSIPWIKFKSNCYSFSTVLHSASFEAAHEFCKKEGSNLLTIKDEAENSFLLEEPFAFGASVQMVWLNAQFDNETVKWLDGTPADQSNWGIRKPDMAHFEPHQCLALRIPEGVWQLSPCQKNMGFICKMKADIHTVKEHPGKGPSHSIVPLAVALTLVVILAIITLSFYIYKQNKGFFRRLAGVGNSYYPTTNFSTIHLEENILISDLEKND.

The signal sequence occupies residues 1–23 (MLLSLLLLLLLGAPRRCTEGAAA). Residues 24 to 1393 (ALSPERVLKW…EHPGKGPSHS (1370 aa)) lie on the Extracellular side of the membrane. Disulfide bonds link cysteine 49/cysteine 62, cysteine 87/cysteine 104, cysteine 176/cysteine 202, cysteine 190/cysteine 217, cysteine 258/cysteine 352, cysteine 328/cysteine 344, cysteine 404/cysteine 499, cysteine 476/cysteine 491, cysteine 615/cysteine 632, cysteine 697/cysteine 794, cysteine 772/cysteine 786, cysteine 838/cysteine 935, cysteine 912/cysteine 927, cysteine 1065/cysteine 1085, cysteine 1207/cysteine 1221, cysteine 1278/cysteine 1373, and cysteine 1350/cysteine 1365. Residues 49–113 (CIQAGKSVLT…CDSTHVSLRW (65 aa)) enclose the Ricin B-type lectin domain. N-linked (GlcNAc...) asparagine glycosylation is present at asparagine 91. The region spanning 171–219 (AHGTPCMFPFQYNHQWHHECTREGRQDDSLWCATTSRYERDEKWGFCPD) is the Fibronectin type-II domain. 8 C-type lectin domains span residues 227-356 (CDAV…KKYL), 374-502 (TDCE…CKKP), 511-645 (SGCQ…KQPV), 660-798 (HPCY…KIPR), 815-939 (LFHQ…KRKT), 954-1098 (GTCP…EKIQ), 1117-1231 (LEYG…AICH), and 1243-1376 (ELCS…CKMK). Asparagine 408, asparagine 431, and asparagine 452 each carry an N-linked (GlcNAc...) asparagine glycan. A helical membrane pass occupies residues 1394–1416 (IVPLAVALTLVVILAIITLSFYI). The Cytoplasmic segment spans residues 1417 to 1458 (YKQNKGFFRRLAGVGNSYYPTTNFSTIHLEENILISDLEKND). Positions 1432 to 1438 (NSYYPTT) match the Endocytosis signal motif.

As to quaternary structure, interacts with sPLA2-IB/PLA2G1B; this interaction mediates intracellular signaling as well as clearance of extracellular sPLA2-IB/PLA2G1B via endocytotic pathway. Interacts with sPLA2-X/PLA2G10; this interaction mediates sPLA2-X/PLA2G10 clearance and inactivation. The secretory phospholipase A2 receptor form may be produced by the action of metalloproteinases. It contains all extracellular domains and only lacks transmembrane and cytosolic regions. It is however unclear whether this form is produced by proteolytic cleavage as suggested by some experiments, or by alternative splicing. As to expression, lung, skeletal muscle, brain, kidney and heart.

It localises to the cell membrane. It is found in the secreted. Its function is as follows. Receptor for secretory phospholipase A2 (sPLA2). Also able to bind to snake PA2-like toxins. Although its precise function remains unclear, binding of sPLA2 to its receptor participates in both positive and negative regulation of sPLA2 functions as well as clearance of sPLA2. Binding of sPLA2-IB/PLA2G1B induces various effects depending on the cell type, such as activation of the mitogen-activated protein kinase (MAPK) cascade to induce cell proliferation, the production of lipid mediators, selective release of arachidonic acid in bone marrow-derived mast cells. In neutrophils, binding of sPLA2-IB/PLA2G1B can activate p38 MAPK to stimulate elastase release and cell adhesion. May be involved in responses in pro-inflammatory cytokine productions during endotoxic shock. Also has endocytic properties and rapidly internalizes sPLA2 ligands, which is particularly important for the clearance of extracellular sPLA2s to protect their potent enzymatic activities. The soluble secretory phospholipase A2 receptor form is circulating and acts as a negative regulator of sPLA2 functions by blocking the biological functions of sPLA2-IB/PLA2G1B and sPLA2-X/PLA2G10. This is Secretory phospholipase A2 receptor (PLA2R1) from Oryctolagus cuniculus (Rabbit).